The sequence spans 809 residues: Poly(A) polymerase (809 aa).

The interval 1–50 is disordered; the sequence is MNKNGGPPVANITTSSTTITSTTTTQAKSQLPSSLSVNNLHTTQGSTDQP. Positions 12 to 25 are enriched in low complexity; sequence ITTSSTTITSTTTT. Over residues 26 to 50 the composition is skewed to polar residues; the sequence is QAKSQLPSSLSVNNLHTTQGSTDQP. Residues 133–135, 146–148, aspartate 200, lysine 262, tyrosine 271, and 280–281 each bind ATP; these read FGS, DID, and GV. Positions 146, 148, and 200 each coordinate Mg(2+). Disordered regions lie at residues 529-760 and 785-809; these read FVKD…QQIQ and ISSS…IRGN. Residues 530–540 are compositionally biased toward basic and acidic residues; the sequence is VKDEGPEEPVK. Residues 572–655 show a composition bias toward low complexity; sequence SPITTNINST…TPPTTTTINS (84 aa). Polar residues predominate over residues 656–665; the sequence is VQPPSAQPTE. Positions 666–706 are enriched in low complexity; the sequence is NGSSTSNSPTSTSINNTALPPNPTTNSESTIETTITLPTTL. A compositionally biased stretch (polar residues) spans 707–735; sequence ESQTSTLKDSNEISTNGTAVATEPTITSP. Low complexity-rich tracts occupy residues 736 to 760 and 785 to 794; these read SVNI…QQIQ and ISSSSETSQS.

Belongs to the poly(A) polymerase family. Mg(2+) serves as cofactor. Mn(2+) is required as a cofactor.

Its subcellular location is the nucleus. It carries out the reaction RNA(n) + ATP = RNA(n)-3'-adenine ribonucleotide + diphosphate. Functionally, polymerase that creates the 3'-poly(A) tail of mRNA's. May acquire specificity through interaction with a cleavage and polyadenylation factor. The protein is Poly(A) polymerase (papA) of Dictyostelium discoideum (Social amoeba).